A 235-amino-acid chain; its full sequence is Ribitol-5-phosphate cytidylyltransferase (235 aa).

CTP contacts are provided by residues 7-10 (LAGG), 82-88 (GADRNTS), and serine 113.

This sequence belongs to the IspD/TarI cytidylyltransferase family. TarI subfamily.

The catalysed reaction is D-ribitol 5-phosphate + CTP + H(+) = CDP-L-ribitol + diphosphate. It participates in cell wall biogenesis; poly(ribitol phosphate) teichoic acid biosynthesis. Catalyzes the transfer of the cytidylyl group of CTP to D-ribitol 5-phosphate. This chain is Ribitol-5-phosphate cytidylyltransferase, found in Streptococcus pneumoniae (strain ATCC 700669 / Spain 23F-1).